Reading from the N-terminus, the 358-residue chain is DNA replication and repair protein RecF (358 aa).

33-40 (GENGAGKT) lines the ATP pocket.

The protein belongs to the RecF family.

Its subcellular location is the cytoplasm. The RecF protein is involved in DNA metabolism; it is required for DNA replication and normal SOS inducibility. RecF binds preferentially to single-stranded, linear DNA. It also seems to bind ATP. This is DNA replication and repair protein RecF from Deinococcus geothermalis (strain DSM 11300 / CIP 105573 / AG-3a).